Consider the following 502-residue polypeptide: Neuronal acetylcholine receptor subunit alpha-7 (502 aa).

An N-terminal signal peptide occupies residues 1–22 (MRCSPGGVWLALAASLLHVSLQ). At 23 to 233 (GEFQRKLYKE…VTMRRRTLYY (211 aa)) the chain is on the extracellular side. R42 and V44 together coordinate Ca(2+). N-linked (GlcNAc...) asparagine glycans are attached at residues N46, N90, and N133. C150 and C164 are joined by a disulfide. S172 and Y210 together coordinate Ca(2+). An intrachain disulfide couples C212 to C213. The next 3 membrane-spanning stretches (helical) occupy residues 234–254 (GLNLLIPCVLISALALLVFLL), 259–279 (GEKISLGITVLLSLTVFMLLV), and 292–315 (LIAQYFASTMIIVGLSVVVTVIVL). Positions 260–267 (EKISLGIT) are essential for TMEM35A/NACHO-mediated proper subunit assembly and trafficking to cell membrane. Topologically, residues 316–466 (QYHHHDPDGG…CSEWKFAACV (151 aa)) are cytoplasmic. A helical transmembrane segment spans residues 467-489 (VDRLCLMAFSVFTIICTIGILMS).

The protein belongs to the ligand-gated ion channel (TC 1.A.9) family. Acetylcholine receptor (TC 1.A.9.1) subfamily. Alpha-7/CHRNA7 sub-subfamily. In terms of assembly, homopentamer. Can also form heteropentamers with CHRNB2, mainly found in basal forebrain cholinergic neurons. Interacts with RIC3; which is required for proper folding and assembly. Interacts with LYPD6. Interacts with CANX. Post-translationally, glycosylations at Asn-46, Asn-90 and Asn-133 are essential for TMEM35A/NACHO-mediated proper subunit assembly and trafficking to the cell membrane. Expressed in neuronal cells. Expressed in macrophages (at protein level).

The protein resides in the postsynaptic cell membrane. Its subcellular location is the cell membrane. The catalysed reaction is Ca(2+)(in) = Ca(2+)(out). It carries out the reaction K(+)(in) = K(+)(out). It catalyses the reaction Na(+)(in) = Na(+)(out). The enzyme catalyses choline(out) = choline(in). The catalysed reaction is NH4(+)(in) = NH4(+)(out). It carries out the reaction L-arginine(in) = L-arginine(out). It catalyses the reaction guanidine(out) = guanidine(in). With respect to regulation, activated by a myriad of ligands such as acetylcholine, cytisine, nicotine, choline and epibatidine. Oligomeric amyloid-beta protein 42 activates specifially CHRNA7:CHRNB2 nAchRs. Activity is modulated by positive allosteric modulators (PAMs), such as flavonoids, with a wide range of chemical diversity, pharmacological sensitivity and efficacy. AChR activity is inhibited by the antagonists alpha-conotoxons RgIA, ImI and ImII, small disulfide-constrained peptides from cone snails. Alpha-conotoxin PnIC selectively inhibits CHRNA7:CHRNB2 over CHRNA7 homopentamer. Component of neuronal acetylcholine receptors (nAChRs) that function as pentameric, ligand-gated cation channels with high calcium permeability among other activities. nAChRs are excitatory neurotrasnmitter receptors formed by a collection of nAChR subunits known to mediate synaptic transmission in the nervous system and the neuromuscular junction. Each nAchR subunit confers differential attributes to channel properties, including activation, deactivation and desensitization kinetics, pH sensitivity, cation permeability, and binding to allosteric modulators. CHRNA7 forms homopentameric neuronal acetylcholine receptors abundantly expressed in the central nervous system, characterized by fast desensitization and high calcium permeability. Also forms heteropentamers with CHRNB2, mainly expressed in basal forebrain cholinergic neurons. Involved in the modulation of calcium-dependent signaling pathways and influences the release of neurotransmitters, including dopamine, glutamate and GABA. Also expressed in non-neuronal cells such as immune cells like lymphocytes, monocytes and macrophages. In T cells, activation induces metabotropic signaling that results in an increase of intracellular Ca2+ concentrations, independent of ionotropic receptor functions. In macrophages, required for acetylcholine-mediated inhibition of TNF and other inflammatory cytokine release. Once activated by acetylcholine, nicotine or other agonists, selectively inhibits production of pro-inflammatory cytokines while leaving anti-inflammatory cytokines undisturbed. Stimulates the cholinergic anti-inflammatory pathway, controlling inflammation by inhibiting NFKB nuclear translocation and activating the JAK2-STAT3 pathway, independently of ion channel activity. Also expressed in the urothelium where it modulates reflex bladder activity by increasing intracellular calcium through internal stores and decreasing basal ATP release. The chain is Neuronal acetylcholine receptor subunit alpha-7 from Homo sapiens (Human).